The following is a 202-amino-acid chain: GTP cyclohydrolase 1 (202 aa).

Zn(2+)-binding residues include cysteine 93, histidine 96, and cysteine 164.

This sequence belongs to the GTP cyclohydrolase I family. As to quaternary structure, toroid-shaped homodecamer, composed of two pentamers of five dimers.

The catalysed reaction is GTP + H2O = 7,8-dihydroneopterin 3'-triphosphate + formate + H(+). It functions in the pathway cofactor biosynthesis; 7,8-dihydroneopterin triphosphate biosynthesis; 7,8-dihydroneopterin triphosphate from GTP: step 1/1. This is GTP cyclohydrolase 1 from Pelagibacter ubique (strain HTCC1062).